A 293-amino-acid polypeptide reads, in one-letter code: Deubiquitinase OTUD6B (293 aa).

N-acetylmethionine is present on Met-1. An OTU domain is found at Leu-147–Leu-284. The cys-loop stretch occupies residues Ile-152–Cys-158. Residue Asp-155 is part of the active site. Cys-158 (nucleophile) is an active-site residue. Residues Ile-219–Leu-229 are variable-loop. Residues Tyr-267–His-277 are his-loop. Residue His-277 is part of the active site.

In terms of assembly, interacts with the eukaryotic translation initiation factor 4F complex.

It carries out the reaction Thiol-dependent hydrolysis of ester, thioester, amide, peptide and isopeptide bonds formed by the C-terminal Gly of ubiquitin (a 76-residue protein attached to proteins as an intracellular targeting signal).. Its function is as follows. Deubiquitinating enzyme that may play a role in the ubiquitin-dependent regulation of protein synthesis, downstream of mTORC1. May associate with the protein synthesis initiation complex and modify its ubiquitination to repress translation. May also repress DNA synthesis and modify different cellular targets thereby regulating cell growth and proliferation. May also play a role in proteasome assembly and function. Stimulates protein synthesis. Influences the expression of CCND1/cyclin D1 by promoting its translation and regulates MYC/c-Myc protein stability. This is Deubiquitinase OTUD6B from Homo sapiens (Human).